We begin with the raw amino-acid sequence, 369 residues long: Histidinol-phosphate aminotransferase 2 (369 aa).

N6-(pyridoxal phosphate)lysine is present on Lys-231.

This sequence belongs to the class-II pyridoxal-phosphate-dependent aminotransferase family. Histidinol-phosphate aminotransferase subfamily. In terms of assembly, homodimer. Pyridoxal 5'-phosphate is required as a cofactor.

The catalysed reaction is L-histidinol phosphate + 2-oxoglutarate = 3-(imidazol-4-yl)-2-oxopropyl phosphate + L-glutamate. It participates in amino-acid biosynthesis; L-histidine biosynthesis; L-histidine from 5-phospho-alpha-D-ribose 1-diphosphate: step 7/9. The sequence is that of Histidinol-phosphate aminotransferase 2 from Legionella pneumophila (strain Paris).